The chain runs to 724 residues: Pesticidal crystal protein Cry11Ba (724 aa).

The protein belongs to the delta endotoxin family.

Functionally, promotes colloidosmotic lysis by binding to the midgut epithelial cells of mosquitos. Active on Aedes aegypti, Culex pipiens and Anopheles stephensi larvae. The protein is Pesticidal crystal protein Cry11Ba (cry11Ba) of Bacillus thuringiensis subsp. jegathesan.